Here is a 762-residue protein sequence, read N- to C-terminus: Cellulose synthase-like protein H2 (762 aa).

Positions 1 to 15 are enriched in low complexity; the sequence is MAVVAAAAATGSTTR. Residues 1 to 39 form a disordered region; it reads MAVVAAAAATGSTTRSGGGGGEGTRSGRKKPPPPPLQER. The next 2 membrane-spanning stretches (helical) occupy residues 47–67 and 81–101; these read AWAW…LLAL and GVWR…ALNV. Active-site residues include D180 and D470. Helical transmembrane passes span 541–561, 582–602, 619–639, 673–693, 708–728, and 739–759; these read LAYL…CYGL, FSVP…EYMA, IISV…SLGL, LPVF…VTVG, APGI…FPFV, and GIPW…VTFC.

Belongs to the glycosyltransferase 2 family. Plant cellulose synthase-like H subfamily.

It is found in the golgi apparatus membrane. In terms of biological role, thought to be a Golgi-localized beta-glycan synthase that polymerize the backbones of noncellulosic polysaccharides (hemicelluloses) of plant cell wall. This chain is Cellulose synthase-like protein H2 (CSLH2), found in Oryza sativa subsp. japonica (Rice).